We begin with the raw amino-acid sequence, 154 residues long: 6,7-dimethyl-8-ribityllumazine synthase (154 aa).

5-amino-6-(D-ribitylamino)uracil is bound by residues Phe26, 60–62 (ALE), and 84–86 (CII). 89–90 (ET) is a (2S)-2-hydroxy-3-oxobutyl phosphate binding site. His92 (proton donor) is an active-site residue. Asn117 lines the 5-amino-6-(D-ribitylamino)uracil pocket. Arg131 is a (2S)-2-hydroxy-3-oxobutyl phosphate binding site.

Belongs to the DMRL synthase family.

It catalyses the reaction (2S)-2-hydroxy-3-oxobutyl phosphate + 5-amino-6-(D-ribitylamino)uracil = 6,7-dimethyl-8-(1-D-ribityl)lumazine + phosphate + 2 H2O + H(+). Its pathway is cofactor biosynthesis; riboflavin biosynthesis; riboflavin from 2-hydroxy-3-oxobutyl phosphate and 5-amino-6-(D-ribitylamino)uracil: step 1/2. Functionally, catalyzes the formation of 6,7-dimethyl-8-ribityllumazine by condensation of 5-amino-6-(D-ribitylamino)uracil with 3,4-dihydroxy-2-butanone 4-phosphate. This is the penultimate step in the biosynthesis of riboflavin. The polypeptide is 6,7-dimethyl-8-ribityllumazine synthase (Polaromonas sp. (strain JS666 / ATCC BAA-500)).